The chain runs to 126 residues: uncharacterized protein (126 aa).

The VOC domain occupies 4-126; the sequence is RIDHTGIMVR…DGEWIEFFQR (123 aa). Residues histidine 7, glutamate 42, histidine 74, and glutamate 122 each contribute to the a divalent metal cation site.

The protein belongs to the glyoxalase I family.

This is an uncharacterized protein from Bacillus subtilis (strain 168).